A 309-amino-acid polypeptide reads, in one-letter code: Protein FdhE homolog (309 aa).

The protein belongs to the FdhE family.

It is found in the cytoplasm. Necessary for formate dehydrogenase activity. This is Protein FdhE homolog from Pectobacterium atrosepticum (strain SCRI 1043 / ATCC BAA-672) (Erwinia carotovora subsp. atroseptica).